The sequence spans 1151 residues: PPi-type phosphoenolpyruvate carboxykinase 1 (1151 aa).

Residues 1083-1129 (RQKLEVAKLNKDLAYLNKTIAEKPRLAETLNKQIAAVKEELQYVSSE) adopt a coiled-coil conformation.

This sequence belongs to the PPi-type phosphoenolpyruvate carboxykinase family. In terms of assembly, monomer and trimer; forms heterotrimers with PEPCK2 and PEPCK3.

It localises to the cytoplasm. The protein resides in the cytosol. It catalyses the reaction oxaloacetate + diphosphate = phosphoenolpyruvate + phosphate + CO2. Its function is as follows. Inorganic pyrophosphate (PPi)-dependent phosphoenolpyruvate carboxykinase, which regulates the carbon flow of the central metabolism by fixing CO(2) to phosphoenolpyruvate to produce oxaloacetate. Can also produce pyruvate and diphosphate from phosphoenolpyruvate and phosphate. The sequence is that of PPi-type phosphoenolpyruvate carboxykinase 1 from Entamoeba histolytica (strain ATCC 30459 / HM-1:IMSS / ABRM).